Here is a 352-residue protein sequence, read N- to C-terminus: Geranylgeranyl transferase type-1 subunit beta (352 aa).

4 PFTB repeats span residues 135–180 (VNKK…FILD), 187–228 (KESA…SLLG), 236–276 (FKEQ…MMID), and 283–325 (FASI…SFGN). Geranylgeranyl diphosphate contacts are provided by residues 213–215 (HGG) and 255–258 (RTNK). Zn(2+) contacts are provided by D261 and C263. 264–267 (YAFW) contacts geranylgeranyl diphosphate. A Zn(2+)-binding site is contributed by H313.

This sequence belongs to the protein prenyltransferase subunit beta family. As to quaternary structure, heterodimer of an alpha and a beta subunit. Zn(2+) is required as a cofactor. Requires Mg(2+) as cofactor.

It carries out the reaction geranylgeranyl diphosphate + L-cysteinyl-[protein] = S-geranylgeranyl-L-cysteinyl-[protein] + diphosphate. In terms of biological role, catalyzes the transfer of a geranyl-geranyl moiety from geranyl-geranyl pyrophosphate to a cysteine at the fourth position from the C-terminus of proteins having the C-terminal sequence Cys-aliphatic-aliphatic-X. This chain is Geranylgeranyl transferase type-1 subunit beta (pggt1b), found in Dictyostelium discoideum (Social amoeba).